The following is a 334-amino-acid chain: Holliday junction branch migration complex subunit RuvB (334 aa).

The segment at Met-1–Tyr-181 is large ATPase domain (RuvB-L). Residues Ile-20, Arg-21, Gly-62, Lys-65, Thr-66, Thr-67, Glu-128–Tyr-130, Arg-171, Tyr-181, and Arg-218 each bind ATP. Thr-66 serves as a coordination point for Mg(2+). The interval Ser-182–Asn-252 is small ATPAse domain (RuvB-S). The tract at residues Lys-255–Asn-334 is head domain (RuvB-H). Residues Arg-310 and Arg-315 each coordinate DNA.

This sequence belongs to the RuvB family. Homohexamer. Forms an RuvA(8)-RuvB(12)-Holliday junction (HJ) complex. HJ DNA is sandwiched between 2 RuvA tetramers; dsDNA enters through RuvA and exits via RuvB. An RuvB hexamer assembles on each DNA strand where it exits the tetramer. Each RuvB hexamer is contacted by two RuvA subunits (via domain III) on 2 adjacent RuvB subunits; this complex drives branch migration. In the full resolvosome a probable DNA-RuvA(4)-RuvB(12)-RuvC(2) complex forms which resolves the HJ.

Its subcellular location is the cytoplasm. The catalysed reaction is ATP + H2O = ADP + phosphate + H(+). In terms of biological role, the RuvA-RuvB-RuvC complex processes Holliday junction (HJ) DNA during genetic recombination and DNA repair, while the RuvA-RuvB complex plays an important role in the rescue of blocked DNA replication forks via replication fork reversal (RFR). RuvA specifically binds to HJ cruciform DNA, conferring on it an open structure. The RuvB hexamer acts as an ATP-dependent pump, pulling dsDNA into and through the RuvAB complex. RuvB forms 2 homohexamers on either side of HJ DNA bound by 1 or 2 RuvA tetramers; 4 subunits per hexamer contact DNA at a time. Coordinated motions by a converter formed by DNA-disengaged RuvB subunits stimulates ATP hydrolysis and nucleotide exchange. Immobilization of the converter enables RuvB to convert the ATP-contained energy into a lever motion, pulling 2 nucleotides of DNA out of the RuvA tetramer per ATP hydrolyzed, thus driving DNA branch migration. The RuvB motors rotate together with the DNA substrate, which together with the progressing nucleotide cycle form the mechanistic basis for DNA recombination by continuous HJ branch migration. Branch migration allows RuvC to scan DNA until it finds its consensus sequence, where it cleaves and resolves cruciform DNA. This is Holliday junction branch migration complex subunit RuvB from Acinetobacter baumannii (strain AB307-0294).